Here is a 197-residue protein sequence, read N- to C-terminus: Ribosome maturation factor RimP (197 aa).

It belongs to the RimP family.

It is found in the cytoplasm. Functionally, required for maturation of 30S ribosomal subunits. This chain is Ribosome maturation factor RimP, found in Acidovorax sp. (strain JS42).